The following is a 72-amino-acid chain: Translation initiation factor IF-1 (72 aa).

Residues 1-72 (MSKEEVLEFS…TKGRIIYRYK (72 aa)) form the S1-like domain.

It belongs to the IF-1 family. As to quaternary structure, component of the 30S ribosomal translation pre-initiation complex which assembles on the 30S ribosome in the order IF-2 and IF-3, IF-1 and N-formylmethionyl-tRNA(fMet); mRNA recruitment can occur at any time during PIC assembly.

The protein resides in the cytoplasm. Functionally, one of the essential components for the initiation of protein synthesis. Stabilizes the binding of IF-2 and IF-3 on the 30S subunit to which N-formylmethionyl-tRNA(fMet) subsequently binds. Helps modulate mRNA selection, yielding the 30S pre-initiation complex (PIC). Upon addition of the 50S ribosomal subunit IF-1, IF-2 and IF-3 are released leaving the mature 70S translation initiation complex. In Bartonella henselae (strain ATCC 49882 / DSM 28221 / CCUG 30454 / Houston 1) (Rochalimaea henselae), this protein is Translation initiation factor IF-1.